The sequence spans 147 residues: Mineralocorticoid receptor (147 aa).

Positions 1 to 147 constitute an NR LBD domain; sequence FALSWRSYKH…SQALKVEFPA (147 aa). 21-hydroxyprogesterone contacts are provided by R6 and T134. Positions 6 and 134 each coordinate aldosterone. Residues R6 and T134 each coordinate progesterone.

It belongs to the nuclear hormone receptor family. NR3 subfamily.

The protein localises to the cytoplasm. It is found in the nucleus. Functionally, receptor for both mineralocorticoids (MC) such as aldosterone and glucocorticoids (GC) such as corticosterone or cortisol. Binds to mineralocorticoid response elements (MRE) and transactivates target genes. The effect of MC is to increase ion and water transport and thus raise extracellular fluid volume and blood pressure and lower potassium levels. The sequence is that of Mineralocorticoid receptor (NR3C2) from Gallus gallus (Chicken).